A 320-amino-acid chain; its full sequence is Cytochrome f (320 aa).

Residues 1–35 form the signal peptide; that stretch reads MQTRNAFSWLKKQITRSISVSLMIYILTRTSISSA. 4 residues coordinate heme: Y36, C56, C59, and H60. Residues 286–306 traverse the membrane as a helical segment; the sequence is VQGLLFFLASVILAQIFLVLK.

The protein belongs to the cytochrome f family. The 4 large subunits of the cytochrome b6-f complex are cytochrome b6, subunit IV (17 kDa polypeptide, petD), cytochrome f and the Rieske protein, while the 4 small subunits are PetG, PetL, PetM and PetN. The complex functions as a dimer. Heme is required as a cofactor.

Its subcellular location is the plastid. It localises to the chloroplast thylakoid membrane. In terms of biological role, component of the cytochrome b6-f complex, which mediates electron transfer between photosystem II (PSII) and photosystem I (PSI), cyclic electron flow around PSI, and state transitions. In Solanum bulbocastanum (Wild potato), this protein is Cytochrome f.